We begin with the raw amino-acid sequence, 141 residues long: Large ribosomal subunit protein uL11 (141 aa).

The protein belongs to the universal ribosomal protein uL11 family. In terms of assembly, part of the ribosomal stalk of the 50S ribosomal subunit. Interacts with L10 and the large rRNA to form the base of the stalk. L10 forms an elongated spine to which L12 dimers bind in a sequential fashion forming a multimeric L10(L12)X complex. One or more lysine residues are methylated.

In terms of biological role, forms part of the ribosomal stalk which helps the ribosome interact with GTP-bound translation factors. The sequence is that of Large ribosomal subunit protein uL11 from Amoebophilus asiaticus (strain 5a2).